Consider the following 428-residue polypeptide: Protein terminus (428 aa).

The segment at 325–346 adopts a C3H1-type zinc-finger fold; sequence CRRCRTQFSRRSKLHIHQKLRC.

The protein is Protein terminus (term) of Drosophila melanogaster (Fruit fly).